A 488-amino-acid polypeptide reads, in one-letter code: Ribulose bisphosphate carboxylase large chain (488 aa).

The substrate site is built by asparagine 127 and threonine 177. The active-site Proton acceptor is lysine 179. Substrate is bound at residue lysine 181. 3 residues coordinate Mg(2+): lysine 205, aspartate 207, and glutamate 208. Lysine 205 carries the N6-carboxylysine modification. Histidine 297 serves as the catalytic Proton acceptor. 3 residues coordinate substrate: arginine 298, histidine 330, and serine 382.

This sequence belongs to the RuBisCO large chain family. Type I subfamily. Heterohexadecamer of 8 large chains and 8 small chains. Requires Mg(2+) as cofactor.

The protein resides in the plastid. The protein localises to the chloroplast. It catalyses the reaction 2 (2R)-3-phosphoglycerate + 2 H(+) = D-ribulose 1,5-bisphosphate + CO2 + H2O. The catalysed reaction is D-ribulose 1,5-bisphosphate + O2 = 2-phosphoglycolate + (2R)-3-phosphoglycerate + 2 H(+). Functionally, ruBisCO catalyzes two reactions: the carboxylation of D-ribulose 1,5-bisphosphate, the primary event in carbon dioxide fixation, as well as the oxidative fragmentation of the pentose substrate in the photorespiration process. Both reactions occur simultaneously and in competition at the same active site. The sequence is that of Ribulose bisphosphate carboxylase large chain from Gracilaria tenuistipitata var. liui (Red alga).